The sequence spans 206 residues: Ribosomal RNA large subunit methyltransferase E (206 aa).

The S-adenosyl-L-methionine site is built by Gly-60, Trp-62, Asp-80, Asp-96, and Asp-121. Residue Lys-161 is the Proton acceptor of the active site.

This sequence belongs to the class I-like SAM-binding methyltransferase superfamily. RNA methyltransferase RlmE family.

It localises to the cytoplasm. The catalysed reaction is uridine(2552) in 23S rRNA + S-adenosyl-L-methionine = 2'-O-methyluridine(2552) in 23S rRNA + S-adenosyl-L-homocysteine + H(+). In terms of biological role, specifically methylates the uridine in position 2552 of 23S rRNA at the 2'-O position of the ribose in the fully assembled 50S ribosomal subunit. The sequence is that of Ribosomal RNA large subunit methyltransferase E from Legionella pneumophila (strain Corby).